The primary structure comprises 419 residues: UDP-N-acetylglucosamine 1-carboxyvinyltransferase (419 aa).

Residue 22 to 23 (KN) coordinates phosphoenolpyruvate. UDP-N-acetyl-alpha-D-glucosamine is bound at residue arginine 92. Cysteine 116 functions as the Proton donor in the catalytic mechanism. 2-(S-cysteinyl)pyruvic acid O-phosphothioketal is present on cysteine 116. UDP-N-acetyl-alpha-D-glucosamine-binding residues include aspartate 306 and isoleucine 328.

This sequence belongs to the EPSP synthase family. MurA subfamily.

It is found in the cytoplasm. The enzyme catalyses phosphoenolpyruvate + UDP-N-acetyl-alpha-D-glucosamine = UDP-N-acetyl-3-O-(1-carboxyvinyl)-alpha-D-glucosamine + phosphate. It functions in the pathway cell wall biogenesis; peptidoglycan biosynthesis. Functionally, cell wall formation. Adds enolpyruvyl to UDP-N-acetylglucosamine. In Psychromonas ingrahamii (strain DSM 17664 / CCUG 51855 / 37), this protein is UDP-N-acetylglucosamine 1-carboxyvinyltransferase.